Here is a 564-residue protein sequence, read N- to C-terminus: Proline--tRNA ligase (564 aa).

The protein belongs to the class-II aminoacyl-tRNA synthetase family. ProS type 1 subfamily. Homodimer.

Its subcellular location is the cytoplasm. It carries out the reaction tRNA(Pro) + L-proline + ATP = L-prolyl-tRNA(Pro) + AMP + diphosphate. Functionally, catalyzes the attachment of proline to tRNA(Pro) in a two-step reaction: proline is first activated by ATP to form Pro-AMP and then transferred to the acceptor end of tRNA(Pro). As ProRS can inadvertently accommodate and process non-cognate amino acids such as alanine and cysteine, to avoid such errors it has two additional distinct editing activities against alanine. One activity is designated as 'pretransfer' editing and involves the tRNA(Pro)-independent hydrolysis of activated Ala-AMP. The other activity is designated 'posttransfer' editing and involves deacylation of mischarged Ala-tRNA(Pro). The misacylated Cys-tRNA(Pro) is not edited by ProRS. The chain is Proline--tRNA ligase from Xanthomonas oryzae pv. oryzae (strain KACC10331 / KXO85).